The primary structure comprises 96 residues: Small ribosomal subunit protein bS6 (96 aa).

It belongs to the bacterial ribosomal protein bS6 family.

Binds together with bS18 to 16S ribosomal RNA. This Streptococcus gordonii (strain Challis / ATCC 35105 / BCRC 15272 / CH1 / DL1 / V288) protein is Small ribosomal subunit protein bS6.